The chain runs to 496 residues: MAGEITETGELYSSYVGLVYMFNLIVGTGALTMPKAFATAGWLVSLVLLVFLGFMSFVTTTFVIEAMAAANAQLHWKRMENLKEEEDDDSSTASDSDVLIRDNYERAEKRPILSVQRRGSPNPFEITDRVEMGQMASMFFNKVGVNLFYFCIIVYLYGDLAIYAAAVPFSLMQVTCSATGNDSCGVEADTKYNDTDRCWGPLRRVDAYRIYLAIFTLLLGPFTFFDVQKTKYLQILTSLMRWIAFAVMIVLALIRIGHGQGEGHPPLADFSGVRNLFGVCVYSFMCQHSLPSLITPVSSKRHLTRLVFLDYVLILAFYGLLSFTAIFCFRGDSLMDMYTLNFARCDVVGLAAVRFFLGLFPVFTISTNFPIIAVTLRNNWKTLFHREGGTYPWVVDRVVFPTITLVPPVLVAFCTHDLESLVGITGAYAGTGIQYVIPAFLVYHCRRDTQLAFGCGVSNKHRSPFRHTFWVGFVLLWAFSCFIFVTANIILSETKL.

Residues 1–10 (MAGEITETGE) lie on the Cytoplasmic side of the membrane. The chain crosses the membrane as a helical span at residues 11 to 31 (LYSSYVGLVYMFNLIVGTGAL). Residues 32 to 36 (TMPKA) lie on the Extracellular side of the membrane. Residues 37-57 (FATAGWLVSLVLLVFLGFMSF) traverse the membrane as a helical segment. Topologically, residues 58-146 (VTTTFVIEAM…SMFFNKVGVN (89 aa)) are cytoplasmic. A helical membrane pass occupies residues 147 to 167 (LFYFCIIVYLYGDLAIYAAAV). Over 168 to 204 (PFSLMQVTCSATGNDSCGVEADTKYNDTDRCWGPLRR) the chain is Extracellular. Asn-193 carries an N-linked (GlcNAc...) asparagine glycan. The helical transmembrane segment at 205–225 (VDAYRIYLAIFTLLLGPFTFF) threads the bilayer. Over 226–233 (DVQKTKYL) the chain is Cytoplasmic. A helical membrane pass occupies residues 234-254 (QILTSLMRWIAFAVMIVLALI). The Extracellular portion of the chain corresponds to 255-276 (RIGHGQGEGHPPLADFSGVRNL). The chain crosses the membrane as a helical span at residues 277-297 (FGVCVYSFMCQHSLPSLITPV). Topologically, residues 298 to 306 (SSKRHLTRL) are cytoplasmic. The chain crosses the membrane as a helical span at residues 307–327 (VFLDYVLILAFYGLLSFTAIF). Over 328 to 354 (CFRGDSLMDMYTLNFARCDVVGLAAVR) the chain is Extracellular. Residues 355 to 375 (FFLGLFPVFTISTNFPIIAVT) form a helical membrane-spanning segment. At 376–397 (LRNNWKTLFHREGGTYPWVVDR) the chain is on the cytoplasmic side. The chain crosses the membrane as a helical span at residues 398 to 418 (VVFPTITLVPPVLVAFCTHDL). The Extracellular segment spans residues 419–421 (ESL). Residues 422–442 (VGITGAYAGTGIQYVIPAFLV) form a helical membrane-spanning segment. At 443 to 470 (YHCRRDTQLAFGCGVSNKHRSPFRHTFW) the chain is on the cytoplasmic side. Residues 471 to 491 (VGFVLLWAFSCFIFVTANIIL) form a helical membrane-spanning segment. The Extracellular segment spans residues 492 to 496 (SETKL).

This sequence belongs to the TMEM104 family.

Its subcellular location is the membrane. The chain is Transmembrane protein 104 (TMEM104) from Homo sapiens (Human).